A 365-amino-acid chain; its full sequence is Protein-glutamate methylesterase/protein-glutamine glutaminase 1 (365 aa).

The Response regulatory domain occupies 4-121 (KVLVVDDSQF…SRDSVVLKKR (118 aa)). Asp-55 carries the 4-aspartylphosphate modification. The interval 138–173 (AARSTTQPSGVRPSALGANLSSSRSPRPASSAPSAP) is disordered. Residues 158 to 172 (SSSRSPRPASSAPSA) show a composition bias toward low complexity. The region spanning 182-365 (KLVAIGASTG…QVWQRLVSDV (184 aa)) is the CheB-type methylesterase domain. Active-site residues include Ser-189, His-216, and Asp-310.

This sequence belongs to the CheB family. Phosphorylated by CheA. Phosphorylation of the N-terminal regulatory domain activates the methylesterase activity.

The protein resides in the cytoplasm. The catalysed reaction is [protein]-L-glutamate 5-O-methyl ester + H2O = L-glutamyl-[protein] + methanol + H(+). It catalyses the reaction L-glutaminyl-[protein] + H2O = L-glutamyl-[protein] + NH4(+). Involved in chemotaxis. Part of a chemotaxis signal transduction system that modulates chemotaxis in response to various stimuli. Catalyzes the demethylation of specific methylglutamate residues introduced into the chemoreceptors (methyl-accepting chemotaxis proteins or MCP) by CheR. Also mediates the irreversible deamidation of specific glutamine residues to glutamic acid. The polypeptide is Protein-glutamate methylesterase/protein-glutamine glutaminase 1 (Saccharophagus degradans (strain 2-40 / ATCC 43961 / DSM 17024)).